Reading from the N-terminus, the 416-residue chain is Serine hydroxymethyltransferase (416 aa).

(6S)-5,6,7,8-tetrahydrofolate is bound by residues Leu121 and Gly125–Leu127. Lys229 carries the N6-(pyridoxal phosphate)lysine modification.

It belongs to the SHMT family. As to quaternary structure, homodimer. Pyridoxal 5'-phosphate is required as a cofactor.

It is found in the cytoplasm. It catalyses the reaction (6R)-5,10-methylene-5,6,7,8-tetrahydrofolate + glycine + H2O = (6S)-5,6,7,8-tetrahydrofolate + L-serine. It functions in the pathway one-carbon metabolism; tetrahydrofolate interconversion. Its pathway is amino-acid biosynthesis; glycine biosynthesis; glycine from L-serine: step 1/1. In terms of biological role, catalyzes the reversible interconversion of serine and glycine with tetrahydrofolate (THF) serving as the one-carbon carrier. This reaction serves as the major source of one-carbon groups required for the biosynthesis of purines, thymidylate, methionine, and other important biomolecules. Also exhibits THF-independent aldolase activity toward beta-hydroxyamino acids, producing glycine and aldehydes, via a retro-aldol mechanism. This is Serine hydroxymethyltransferase from Neisseria meningitidis serogroup A / serotype 4A (strain DSM 15465 / Z2491).